The chain runs to 2655 residues: Probable polyketide synthase 42 (2655 aa).

In terms of domain architecture, Ketosynthase family 3 (KS3) spans 16–445 (QNGVAVIGVG…GSNCCIILSE (430 aa)). Catalysis depends on for beta-ketoacyl synthase activity residues C186, H325, and H368. Residues 634-667 (GIKSDIMVGHSFGEIACSYCSGMVDFKTLCYLTY) form an acyl/malonyl transferase region. S644 functions as the For acyl/malonyl transferase activity in the catalytic mechanism. The interval 926–1059 (HPTWKKANKN…ANYSLFKHND (134 aa)) is N-terminal hotdog fold. The PKS/mFAS DH domain maps to 926–1234 (HPTWKKANKN…CKSSIPIIDS (309 aa)). Residue H970 is the Proton acceptor; for dehydratase activity of the active site. Residues 1074–1234 (NYTIISKDEL…CKSSIPIIDS (161 aa)) form a C-terminal hotdog fold region. The active-site Proton donor; for dehydratase activity is D1146. Residues 1700-1719 (YNNNNNNNNNNNNNNNNNNN) are disordered. The Carrier domain occupies 2517–2594 (NENNNIGDLL…TTIEIIIKGY (78 aa)). Residue S2554 is modified to O-(pantetheine 4'-phosphoryl)serine. Residues 2612 to 2655 (SVVQKETIKDNNENKDDIKIDMDDKKENLKGKKENIDDKKENNN) form a disordered region. Residues 2617 to 2655 (ETIKDNNENKDDIKIDMDDKKENLKGKKENIDDKKENNN) are compositionally biased toward basic and acidic residues. Residues 2618 to 2655 (TIKDNNENKDDIKIDMDDKKENLKGKKENIDDKKENNN) are a coiled coil.

It depends on pantetheine 4'-phosphate as a cofactor.

In terms of biological role, probable polyketide synthase. In Dictyostelium discoideum (Social amoeba), this protein is Probable polyketide synthase 42 (pks42).